The following is a 185-amino-acid chain: Elongation factor P (185 aa).

The protein belongs to the elongation factor P family.

It is found in the cytoplasm. Its pathway is protein biosynthesis; polypeptide chain elongation. In terms of biological role, involved in peptide bond synthesis. Stimulates efficient translation and peptide-bond synthesis on native or reconstituted 70S ribosomes in vitro. Probably functions indirectly by altering the affinity of the ribosome for aminoacyl-tRNA, thus increasing their reactivity as acceptors for peptidyl transferase. This Gloeothece citriformis (strain PCC 7424) (Cyanothece sp. (strain PCC 7424)) protein is Elongation factor P.